The sequence spans 264 residues: uncharacterized protein (264 aa).

A helical membrane pass occupies residues 182-198; it reads TVTGVSNALGFIIAALL.

It to E.coli YjiC.

The protein resides in the membrane. This is an uncharacterized protein from Escherichia coli (strain K12).